The primary structure comprises 235 residues: Large ribosomal subunit protein uL1 (235 aa).

This sequence belongs to the universal ribosomal protein uL1 family. Part of the 50S ribosomal subunit.

Functionally, binds directly to 23S rRNA. The L1 stalk is quite mobile in the ribosome, and is involved in E site tRNA release. Protein L1 is also a translational repressor protein, it controls the translation of the L11 operon by binding to its mRNA. In Mycobacterium tuberculosis (strain ATCC 25177 / H37Ra), this protein is Large ribosomal subunit protein uL1.